Reading from the N-terminus, the 181-residue chain is NAD(P)H-quinone oxidoreductase subunit I, chloroplastic (181 aa).

4Fe-4S ferredoxin-type domains are found at residues 52-81 (GRIH…VDWE) and 92-121 (KSYS…MTEE). Positions 61, 64, 67, 71, 101, 104, 107, and 111 each coordinate [4Fe-4S] cluster.

The protein belongs to the complex I 23 kDa subunit family. As to quaternary structure, NDH is composed of at least 16 different subunits, 5 of which are encoded in the nucleus. Requires [4Fe-4S] cluster as cofactor.

It localises to the plastid. The protein localises to the chloroplast thylakoid membrane. The enzyme catalyses a plastoquinone + NADH + (n+1) H(+)(in) = a plastoquinol + NAD(+) + n H(+)(out). It catalyses the reaction a plastoquinone + NADPH + (n+1) H(+)(in) = a plastoquinol + NADP(+) + n H(+)(out). Functionally, NDH shuttles electrons from NAD(P)H:plastoquinone, via FMN and iron-sulfur (Fe-S) centers, to quinones in the photosynthetic chain and possibly in a chloroplast respiratory chain. The immediate electron acceptor for the enzyme in this species is believed to be plastoquinone. Couples the redox reaction to proton translocation, and thus conserves the redox energy in a proton gradient. The protein is NAD(P)H-quinone oxidoreductase subunit I, chloroplastic of Staurastrum punctulatum (Green alga).